Consider the following 1131-residue polypeptide: Chitin synthase 1 (1131 aa).

The segment covering 1–20 has biased composition (basic and acidic residues); it reads MSDQNNRSRNEYHSNRKNEP. The disordered stretch occupies residues 1-22; it reads MSDQNNRSRNEYHSNRKNEPSY. 5 positions are modified to phosphoserine: Ser-34, Ser-35, Ser-270, Ser-299, and Ser-318. Positions 282–305 are disordered; the sequence is YLHDDSRPVNDGKEELDSVKSGYS. Thr-328 bears the Phosphothreonine mark. A Phosphoserine modification is found at Ser-358. The next 7 membrane-spanning stretches (helical) occupy residues 795-815, 833-853, 866-886, 914-934, 942-962, 1042-1062, and 1101-1121; these read FFYL…FFLV, VLSV…FILS, VLTC…SIFM, IVIS…IYLQ, FIQY…YAFC, LVII…LETG, and ILWL…IYMI.

Belongs to the chitin synthase family.

Its subcellular location is the cell membrane. It carries out the reaction [(1-&gt;4)-N-acetyl-beta-D-glucosaminyl](n) + UDP-N-acetyl-alpha-D-glucosamine = [(1-&gt;4)-N-acetyl-beta-D-glucosaminyl](n+1) + UDP + H(+). Its activity is regulated as follows. Requires proteolytic activation. Functionally, polymerizes chitin, a structural polymer of the cell wall and septum, by transferring the sugar moiety of UDP-GlcNAc to the non-reducing end of the growing chitin polymer. Required for mitotic division septum formation during adverse conditions. The sequence is that of Chitin synthase 1 (CHS1) from Saccharomyces cerevisiae (strain ATCC 204508 / S288c) (Baker's yeast).